The chain runs to 264 residues: Putative hydro-lyase RBAM_004300 (264 aa).

The protein belongs to the D-glutamate cyclase family.

The chain is Putative hydro-lyase RBAM_004300 from Bacillus velezensis (strain DSM 23117 / BGSC 10A6 / LMG 26770 / FZB42) (Bacillus amyloliquefaciens subsp. plantarum).